Reading from the N-terminus, the 406-residue chain is Lysosome-associated membrane glycoprotein 1 (406 aa).

The N-terminal stretch at 1 to 24 is a signal peptide; it reads MAAPGARRPLLLLLLAGLAHGASA. The tract at residues 25 to 188 is first lumenal domain; sequence LFEVKNNGTT…SKEETHCTQD (164 aa). Residues 25 to 370 lie on the Lumenal side of the membrane; sequence LFEVKNNGTT…VEECVQDGNN (346 aa). N-linked (GlcNAc...) asparagine glycans are attached at residues Asn-31, Asn-52, Asn-58, Asn-70, Asn-78, Asn-97, Asn-101, Asn-115, Asn-159, and Asn-177. Cys-35 and Cys-74 are disulfide-bonded. Cys-149 and Cys-185 are oxidised to a cystine. Residues 180-207 form a disordered region; it reads KEETHCTQDGPSPTTGPPSPSPPLVPTN. Residues 189–218 are hinge; the sequence is GPSPTTGPPSPSPPLVPTNPTVSKYNVTGN. Pro residues predominate over residues 193–205; that stretch reads TTGPPSPSPPLVP. Residues Asn-214, Asn-219, Asn-232, and Asn-240 are each glycosylated (N-linked (GlcNAc...) asparagine). Positions 219-370 are second lumenal domain; sequence NGTCLLASMA…VEECVQDGNN (152 aa). The cysteines at positions 222 and 259 are disulfide-linked. Asn-252 is a glycosylation site (N-linked (GlcNAc...) (high mannose) asparagine). 3 N-linked (GlcNAc...) asparagine glycosylation sites follow: Asn-282, Asn-296, and Asn-311. A disulfide bond links Cys-327 and Cys-364. A helical transmembrane segment spans residues 371–394; that stretch reads MLIPIAVGGALAGLVLIVLIAYLI. At 395–406 the chain is on the cytoplasmic side; sequence GRKRSHAGYQTI.

The protein belongs to the LAMP family. As to quaternary structure, interacts with ABCB9; this interaction strongly stabilizes ABCB9 and protects ABCB9 against lysosomal degradation. Interacts with FURIN. Interacts with TMEM175; inhibiting the proton channel activity of TMEM175. In terms of processing, O- and N-glycosylated; some of the N-glycans attached to LAMP-1 are polylactosaminoglycans.

It is found in the lysosome membrane. Its subcellular location is the endosome membrane. It localises to the late endosome membrane. The protein localises to the cell membrane. The protein resides in the cytolytic granule membrane. Its function is as follows. Lysosomal membrane glycoprotein which plays an important role in lysosome biogenesis, lysosomal pH regulation, autophagy and cholesterol homeostasis. Acts as an important regulator of lysosomal lumen pH regulation by acting as a direct inhibitor of the proton channel TMEM175, facilitating lysosomal acidification for optimal hydrolase activity. Also plays an important role in NK-cells cytotoxicity. Mechanistically, participates in cytotoxic granule movement to the cell surface and perforin trafficking to the lytic granule. In addition, protects NK-cells from degranulation-associated damage induced by their own cytotoxic granule content. Presents carbohydrate ligands to selectins. Also implicated in tumor cell metastasis. This is Lysosome-associated membrane glycoprotein 1 (Lamp1) from Mus musculus (Mouse).